The following is a 155-amino-acid chain: Regulatory protein RecX (155 aa).

This sequence belongs to the RecX family.

It localises to the cytoplasm. Its function is as follows. Modulates RecA activity. This chain is Regulatory protein RecX, found in Vibrio parahaemolyticus serotype O3:K6 (strain RIMD 2210633).